Reading from the N-terminus, the 361-residue chain is MLFNLLYPLADEFQIFNLFRYITFRTGGAMVTALLISFVIGPRVIRWLKSVQGEGQPIRTDGPETHLKKKGTPTMGGLMILIAVIVSTLLWVDLANVYTWIVLLVTVGFGLIGFGDDFLKLTKRNTKGLSGRLKLAWTIAIAGVAATWYIAVTPHPLDTGLAVPFFKDLLVNLGWFFIPFAILVMVGASNAVNLTDGLDGLAIVPIMIAAATFGLIAYLSGNAIFAGYLQIHHVPGTGELAVFCGALVGAGLGFLWFNAPPAMVFMGDTGSLSMGGALGAVSVMTKHELVLAIVGGLFVLEAVSVMVQVASFKLTGKRVFRMAPIHHHFEKKGWSEPTVVIRFWIIAAILALVGLSTLKLR.

10 consecutive transmembrane segments (helical) span residues 21-41 (YITFRTGGAMVTALLISFVIG), 72-92 (TPTMGGLMILIAVIVSTLLWV), 94-114 (LANVYTWIVLLVTVGFGLIGF), 135-155 (LAWTIAIAGVAATWYIAVTPH), 169-189 (LLVNLGWFFIPFAILVMVGAS), 200-220 (GLAIVPIMIAAATFGLIAYLS), 240-260 (LAVFCGALVGAGLGFLWFNAP), 263-283 (MVFMGDTGSLSMGGALGAVSV), 289-309 (LVLAIVGGLFVLEAVSVMVQV), and 338-358 (TVVIRFWIIAAILALVGLSTL).

This sequence belongs to the glycosyltransferase 4 family. MraY subfamily. Mg(2+) serves as cofactor.

It localises to the cell inner membrane. It catalyses the reaction UDP-N-acetyl-alpha-D-muramoyl-L-alanyl-gamma-D-glutamyl-meso-2,6-diaminopimeloyl-D-alanyl-D-alanine + di-trans,octa-cis-undecaprenyl phosphate = di-trans,octa-cis-undecaprenyl diphospho-N-acetyl-alpha-D-muramoyl-L-alanyl-D-glutamyl-meso-2,6-diaminopimeloyl-D-alanyl-D-alanine + UMP. It participates in cell wall biogenesis; peptidoglycan biosynthesis. Functionally, catalyzes the initial step of the lipid cycle reactions in the biosynthesis of the cell wall peptidoglycan: transfers peptidoglycan precursor phospho-MurNAc-pentapeptide from UDP-MurNAc-pentapeptide onto the lipid carrier undecaprenyl phosphate, yielding undecaprenyl-pyrophosphoryl-MurNAc-pentapeptide, known as lipid I. The sequence is that of Phospho-N-acetylmuramoyl-pentapeptide-transferase from Rhodospirillum centenum (strain ATCC 51521 / SW).